The primary structure comprises 114 residues: Superoxide dismutase [Cu-Zn] (114 aa).

Residues His-37, His-39, and His-54 each contribute to the Cu cation site. Zn(2+)-binding residues include His-54, His-62, His-71, and Asp-74. The tract at residues 54–80 is disordered; that stretch reads HFNPGNKEHGAPTDGNRHLGDLGNIQA. Over residues 59–73 the composition is skewed to basic and acidic residues; it reads NKEHGAPTDGNRHLG. His-111 is a Cu cation binding site.

This sequence belongs to the Cu-Zn superoxide dismutase family. As to quaternary structure, homodimer. Requires Cu cation as cofactor. It depends on Zn(2+) as a cofactor.

It is found in the cytoplasm. It carries out the reaction 2 superoxide + 2 H(+) = H2O2 + O2. Its function is as follows. Destroys radicals which are normally produced within the cells and which are toxic to biological systems. This Drosophila tolteca (Fruit fly) protein is Superoxide dismutase [Cu-Zn].